Reading from the N-terminus, the 306-residue chain is tRNA dimethylallyltransferase (306 aa).

12–19 (GPTASGKT) contacts ATP. 14-19 (TASGKT) is a substrate binding site. 3 interaction with substrate tRNA regions span residues 37–40 (DSAL), 161–165 (QRLSR), and 242–247 (RCVGYR).

It belongs to the IPP transferase family. As to quaternary structure, monomer. The cofactor is Mg(2+).

It catalyses the reaction adenosine(37) in tRNA + dimethylallyl diphosphate = N(6)-dimethylallyladenosine(37) in tRNA + diphosphate. In terms of biological role, catalyzes the transfer of a dimethylallyl group onto the adenine at position 37 in tRNAs that read codons beginning with uridine, leading to the formation of N6-(dimethylallyl)adenosine (i(6)A). The chain is tRNA dimethylallyltransferase from Shewanella amazonensis (strain ATCC BAA-1098 / SB2B).